We begin with the raw amino-acid sequence, 278 residues long: HTH-type transcriptional activator RhaS (278 aa).

The region spanning 174–272 is the HTH araC/xylS-type domain; it reads NLLLAWLEDH…NWSPRDIRQG (99 aa). DNA-binding regions (H-T-H motif) lie at residues 191–212 and 239–262; these read DAVADQFSLSLRTLHRQLKQQT and VTDIAYRCGFSDSNHFSTLFRREF.

Binds DNA as a dimer.

The protein localises to the cytoplasm. Activates expression of the rhaBAD and rhaT operons. This chain is HTH-type transcriptional activator RhaS, found in Escherichia coli (strain SMS-3-5 / SECEC).